The sequence spans 264 residues: Proteasome assembly chaperone 2 (264 aa).

Threonine 137 is subject to Phosphothreonine.

Belongs to the PSMG2 family. In terms of assembly, forms a heterodimer with PSMG1. The PSMG1-PSMG2 heterodimer interacts directly with the PSMA5 and PSMA7 proteasome alpha subunits. Degraded by the proteasome upon completion of 20S proteasome maturation.

It localises to the nucleus. Chaperone protein which promotes assembly of the 20S proteasome as part of a heterodimer with PSMG1. The PSMG1-PSMG2 heterodimer binds to the PSMA5 and PSMA7 proteasome subunits, promotes assembly of the proteasome alpha subunits into the heteroheptameric alpha ring and prevents alpha ring dimerization. In Bos taurus (Bovine), this protein is Proteasome assembly chaperone 2.